Here is a 53-residue protein sequence, read N- to C-terminus: ATP synthase protein 8 (53 aa).

A helical membrane pass occupies residues 4 to 24; the sequence is MAPISWLLLFIVFSITFILFC.

Belongs to the ATPase protein 8 family. In terms of assembly, F-type ATPases have 2 components, CF(1) - the catalytic core - and CF(0) - the membrane proton channel.

The protein localises to the mitochondrion membrane. Mitochondrial membrane ATP synthase (F(1)F(0) ATP synthase or Complex V) produces ATP from ADP in the presence of a proton gradient across the membrane which is generated by electron transport complexes of the respiratory chain. F-type ATPases consist of two structural domains, F(1) - containing the extramembraneous catalytic core and F(0) - containing the membrane proton channel, linked together by a central stalk and a peripheral stalk. During catalysis, ATP synthesis in the catalytic domain of F(1) is coupled via a rotary mechanism of the central stalk subunits to proton translocation. Part of the complex F(0) domain. Minor subunit located with subunit a in the membrane. This is ATP synthase protein 8 (mt:ATPase8) from Drosophila yakuba (Fruit fly).